The chain runs to 129 residues: ATP synthase epsilon chain (129 aa).

Belongs to the ATPase epsilon chain family. As to quaternary structure, F-type ATPases have 2 components, CF(1) - the catalytic core - and CF(0) - the membrane proton channel. CF(1) has five subunits: alpha(3), beta(3), gamma(1), delta(1), epsilon(1). CF(0) has three main subunits: a, b and c.

The protein resides in the cell inner membrane. Its function is as follows. Produces ATP from ADP in the presence of a proton gradient across the membrane. This is ATP synthase epsilon chain from Campylobacter fetus subsp. fetus (strain 82-40).